Consider the following 62-residue polypeptide: Large ribosomal subunit protein bL28 (62 aa).

This sequence belongs to the bacterial ribosomal protein bL28 family.

The protein is Large ribosomal subunit protein bL28 of Phytoplasma mali (strain AT).